Consider the following 126-residue polypeptide: Large ribosomal subunit protein uL22 (126 aa).

The protein belongs to the universal ribosomal protein uL22 family. As to quaternary structure, part of the 50S ribosomal subunit.

Its function is as follows. This protein binds specifically to 23S rRNA; its binding is stimulated by other ribosomal proteins, e.g. L4, L17, and L20. It is important during the early stages of 50S assembly. It makes multiple contacts with different domains of the 23S rRNA in the assembled 50S subunit and ribosome. The globular domain of the protein is located near the polypeptide exit tunnel on the outside of the subunit, while an extended beta-hairpin is found that lines the wall of the exit tunnel in the center of the 70S ribosome. This chain is Large ribosomal subunit protein uL22, found in Sphingopyxis alaskensis (strain DSM 13593 / LMG 18877 / RB2256) (Sphingomonas alaskensis).